The chain runs to 339 residues: Chromo domain-containing protein cec-3 (339 aa).

The interval 1 to 21 (MSNEGSREESREPEAREGKSD) is disordered. A Chromo domain is found at 24–84 (FEVEKILAHK…KLKVTDKTEL (61 aa)). Residues 91–105 (QIKKNKSQKSKKRSK) are compositionally biased toward basic residues. Disordered stretches follow at residues 91-199 (QIKK…APLS) and 215-272 (EEKA…QRTL). Basic and acidic residues-rich tracts occupy residues 106 to 117 (TVSDHESNHDSD) and 171 to 183 (AAMEVRDTRRNWL). The segment covering 184–193 (DEESSDDEAE) has biased composition (acidic residues). The span at 230-241 (KPREVVIKKDPS) shows a compositional bias: basic and acidic residues. Residues 242 to 251 (ESPVASASSV) show a composition bias toward low complexity.

As to expression, expressed in every cell of the embryo (at protein level). In adults, expressed predominantly in the head region and the germline.

Its subcellular location is the chromosome. It localises to the nucleus. Specifically recognizes and binds methylated 'Lys-9' of histone H3 (H3K9me), with highest preference for trimethylated 'Lys-9' (H3K9me3) followed by dimethylated 'Lys-9' (H3K9me2) followed by monomethylated 'Lys-9' (H3K9me1). Plays a role in maintaining correct unc-4 expression in the VC motor neurons where unc-4 is expressed in the vulval but not in the non-vulval VC neurons. The polypeptide is Chromo domain-containing protein cec-3 (cec-3) (Caenorhabditis elegans).